We begin with the raw amino-acid sequence, 110 residues long: Late cornified envelope-like proline-rich protein 1 (110 aa).

The interval 1–24 (MSSDDKNKPGEPKNEPKQCDPGCE) is disordered.

This sequence belongs to the cornifin (SPRR) family.

This chain is Late cornified envelope-like proline-rich protein 1 (LELP1), found in Bos taurus (Bovine).